Here is a 225-residue protein sequence, read N- to C-terminus: Ribulose-phosphate 3-epimerase (225 aa).

Ser9 provides a ligand contact to substrate. Residues His34, Asp36, and His68 each coordinate a divalent metal cation. Asp36 (proton acceptor) is an active-site residue. Substrate is bound by residues His68, 144–147 (GFGG), 177–179 (DGG), and 199–200 (GS). Asp177 is a binding site for a divalent metal cation. Catalysis depends on Asp177, which acts as the Proton donor.

This sequence belongs to the ribulose-phosphate 3-epimerase family. Requires a divalent metal cation as cofactor.

It catalyses the reaction D-ribulose 5-phosphate = D-xylulose 5-phosphate. It functions in the pathway carbohydrate degradation. In terms of biological role, catalyzes the reversible epimerization of D-ribulose 5-phosphate to D-xylulose 5-phosphate. This chain is Ribulose-phosphate 3-epimerase, found in Escherichia coli O157:H7.